The primary structure comprises 209 residues: Bilin biosynthesis protein RpcF (209 aa).

Belongs to the CpcE/RpcE/PecE family.

In terms of biological role, an enzyme involved in the biosynthesis of bilin. Might be involved in the specific attachment of phycoerythrobilin (PEB) to the R-phycocyanin II alpha chain. In Synechococcus sp. (strain WH8020), this protein is Bilin biosynthesis protein RpcF (rpcF).